A 371-amino-acid chain; its full sequence is Chaperone protein DnaJ (371 aa).

In terms of domain architecture, J spans 5–69 (DYYEVLGLSK…QKRAQYDQFG (65 aa)). The segment at 133-215 (GKELNVEIPV…CHGSGKVRKR (83 aa)) adopts a CR-type zinc-finger fold. The Zn(2+) site is built by cysteine 146, cysteine 149, cysteine 163, cysteine 166, cysteine 189, cysteine 192, cysteine 203, and cysteine 206. CXXCXGXG motif repeat units lie at residues 146 to 153 (CDTCKGSG), 163 to 170 (CKHCSGSG), 189 to 196 (CSHCSGTG), and 203 to 210 (CTTCHGSG).

Belongs to the DnaJ family. In terms of assembly, homodimer. Zn(2+) serves as cofactor.

It is found in the cytoplasm. In terms of biological role, participates actively in the response to hyperosmotic and heat shock by preventing the aggregation of stress-denatured proteins and by disaggregating proteins, also in an autonomous, DnaK-independent fashion. Unfolded proteins bind initially to DnaJ; upon interaction with the DnaJ-bound protein, DnaK hydrolyzes its bound ATP, resulting in the formation of a stable complex. GrpE releases ADP from DnaK; ATP binding to DnaK triggers the release of the substrate protein, thus completing the reaction cycle. Several rounds of ATP-dependent interactions between DnaJ, DnaK and GrpE are required for fully efficient folding. Also involved, together with DnaK and GrpE, in the DNA replication of plasmids through activation of initiation proteins. The polypeptide is Chaperone protein DnaJ (Bacillus anthracis (strain A0248)).